We begin with the raw amino-acid sequence, 184 residues long: MKSENVSKKKSILEWAKAIVIAVVLALLIRNFIFAPYVVDGDSMYPTLHNRERVFVNMTVKYIGEFDRGDIVVLNGDDVHYVKRIIGLPGDTVEMKNDQLYINGKKVDEPYLAANKKRAKQDGFDHLTDDFGPVKVPDNKYFVMGDNRRNSMDSRNGLGLFTKKQIAGTSKFVFYPFNEMRKTN.

The Cytoplasmic portion of the chain corresponds to 1 to 18 (MKSENVSKKKSILEWAKA). A helical membrane pass occupies residues 19-39 (IVIAVVLALLIRNFIFAPYVV). The Extracellular segment spans residues 40 to 184 (DGDSMYPTLH…YPFNEMRKTN (145 aa)). Residues S43 and K83 contribute to the active site.

The protein belongs to the peptidase S26 family.

It is found in the cell membrane. It catalyses the reaction Cleavage of hydrophobic, N-terminal signal or leader sequences from secreted and periplasmic proteins.. Functionally, not essential for cell viability, but required for efficient secretion of many proteins. In Bacillus subtilis (strain 168), this protein is Signal peptidase I S (sipS).